A 52-amino-acid polypeptide reads, in one-letter code: MKFSTILLLVCPTVALSAQYALACTETGRNCQYSYECCSGACSAAFGFCLHR.

Positions 1–18 (MKFSTILLLVCPTVALSA) are cleaved as a signal peptide. Intrachain disulfides connect Cys24–Cys38, Cys31–Cys42, and Cys37–Cys49.

It is found in the secreted. The protein is Conotoxin-like peptide 2 (CTL-2) of Orgyia pseudotsugata (Douglas-fir tussock moth).